The following is a 90-amino-acid chain: Actobindin-B/C (90 aa).

WH2 domains lie at 4-21 (TANP…LKHA) and 40-57 (DHSS…LKHV). The disordered stretch occupies residues 57 to 90 (VETQDRSAPVTEGATVKSNNHSALLGEIKSKAQE).

As to quaternary structure, monomer.

Is able to bind two actin monomers at high concentrations of G-actin. Inhibits actin polymerization by sequestering G-actin and stabilizing actin dimers. In Dictyostelium discoideum (Social amoeba), this protein is Actobindin-B/C (abnB).